The sequence spans 207 residues: Large ribosomal subunit protein uL3 (207 aa).

The segment at 119–143 (GFQGSIKRNGQHRGPMAHGSRYHRR) is disordered.

The protein belongs to the universal ribosomal protein uL3 family. Part of the 50S ribosomal subunit. Forms a cluster with proteins L14 and L19.

Functionally, one of the primary rRNA binding proteins, it binds directly near the 3'-end of the 23S rRNA, where it nucleates assembly of the 50S subunit. The protein is Large ribosomal subunit protein uL3 of Ligilactobacillus salivarius (strain UCC118) (Lactobacillus salivarius).